The following is a 94-amino-acid chain: MSEEKPKEGVKTENDHINLKVAGQDGSVVQFKIKRHTPLSKLMKAYCERQGLSMRQIRFRFDGQPINEADTPAQLEMEDEDTIDVFQQQTGGLC.

Residue Lys-11 forms a Glycyl lysine isopeptide (Lys-Gly) (interchain with G-Cter in SUMO) linkage. In terms of domain architecture, Ubiquitin-like spans 15-92 (DHINLKVAGQ…IDVFQQQTGG (78 aa)). Gly-92 is covalently cross-linked (Glycyl lysine isopeptide (Gly-Lys) (interchain with K-? in acceptor proteins)). The propeptide occupies 93–94 (LC).

Belongs to the ubiquitin family. SUMO subfamily. As to quaternary structure, interacts with SAE2 and UBE2I. Covalently attached to a number of proteins. In terms of processing, polymeric chains can be formed through Lys-11 cross-linking. Cleavage of precursor form by a sentrin-specific protease is necessary for function.

It is found in the cytoplasm. The protein resides in the nucleus. Its subcellular location is the PML body. Ubiquitin-like protein which can be covalently attached to target lysines either as a monomer or as a lysine-linked polymer. Does not seem to be involved in protein degradation and may function as an antagonist of ubiquitin in the degradation process. Plays a role in a number of cellular processes such as nuclear transport, DNA replication and repair, mitosis and signal transduction. Covalent attachment to its substrates requires prior activation by the E1 complex SAE1-SAE2 and linkage to the E2 enzyme UBE2I. This is Small ubiquitin-related modifier 3 from Gallus gallus (Chicken).